The chain runs to 415 residues: Phosphoribosylamine--glycine ligase (415 aa).

Residues 108-311 enclose the ATP-grasp domain; it reads KKIMKKYNIP…LMQHIIDLDE (204 aa). 134 to 191 serves as a coordination point for ATP; it reads IENCELPVVVKKDGLAAGKGVIIADTIEAARSAIEIMYGDEEEGTVVFETFLEGEEFS. Mg(2+) contacts are provided by Glu-281 and Asn-283.

Belongs to the GARS family. The cofactor is Mg(2+). Mn(2+) is required as a cofactor.

The catalysed reaction is 5-phospho-beta-D-ribosylamine + glycine + ATP = N(1)-(5-phospho-beta-D-ribosyl)glycinamide + ADP + phosphate + H(+). Its pathway is purine metabolism; IMP biosynthesis via de novo pathway; N(1)-(5-phospho-D-ribosyl)glycinamide from 5-phospho-alpha-D-ribose 1-diphosphate: step 2/2. In Staphylococcus aureus (strain Mu50 / ATCC 700699), this protein is Phosphoribosylamine--glycine ligase.